The chain runs to 419 residues: Capsule polysaccharide modification protein LipB (419 aa).

The protein localises to the cell inner membrane. Involved in the phospholipid modification of the capsular polysaccharide, a strong requirement for its translocation to the cell surface. This chain is Capsule polysaccharide modification protein LipB (lipB), found in Neisseria meningitidis serogroup B (strain ATCC BAA-335 / MC58).